The chain runs to 169 residues: Cytochrome c oxidase subunit 4 isoform 1, mitochondrial (169 aa).

Residues M1–R22 constitute a mitochondrion transit peptide. Residues A23 to N98 are Mitochondrial matrix-facing. K29 carries the post-translational modification N6-acetyllysine; alternate. K29 bears the N6-succinyllysine; alternate mark. Position 53 is an N6-acetyllysine (K53). Phosphoserine is present on residues S56 and S58. N6-acetyllysine; alternate is present on K60. Position 60 is an N6-succinyllysine; alternate (K60). K67 carries the post-translational modification N6-acetyllysine. A helical transmembrane segment spans residues E99–Y124. The Mitochondrial intermembrane portion of the chain corresponds to V125–K169.

This sequence belongs to the cytochrome c oxidase IV family. As to quaternary structure, component of the cytochrome c oxidase (complex IV, CIV), a multisubunit enzyme composed of 14 subunits. The complex is composed of a catalytic core of 3 subunits MT-CO1, MT-CO2 and MT-CO3, encoded in the mitochondrial DNA, and 11 supernumerary subunits COX4I, COX5A, COX5B, COX6A, COX6B, COX6C, COX7A, COX7B, COX7C, COX8 and NDUFA4, which are encoded in the nuclear genome. The complex exists as a monomer or a dimer and forms supercomplexes (SCs) in the inner mitochondrial membrane with NADH-ubiquinone oxidoreductase (complex I, CI) and ubiquinol-cytochrome c oxidoreductase (cytochrome b-c1 complex, complex III, CIII), resulting in different assemblies (supercomplex SCI(1)III(2)IV(1) and megacomplex MCI(2)III(2)IV(2)). Interacts with PHB2; the interaction decreases in absence of SPHK2. Interacts with AFG1L. Interacts with ABCB7; this interaction allows the regulation of cellular iron homeostasis and cellular reactive oxygen species (ROS) levels in cardiomyocytes. Interacts with FLVCR2; this interaction occurs in the absence of heme and is disrupted upon heme binding. Interacts with IRGC.

It localises to the mitochondrion inner membrane. Its pathway is energy metabolism; oxidative phosphorylation. Its function is as follows. Component of the cytochrome c oxidase, the last enzyme in the mitochondrial electron transport chain which drives oxidative phosphorylation. The respiratory chain contains 3 multisubunit complexes succinate dehydrogenase (complex II, CII), ubiquinol-cytochrome c oxidoreductase (cytochrome b-c1 complex, complex III, CIII) and cytochrome c oxidase (complex IV, CIV), that cooperate to transfer electrons derived from NADH and succinate to molecular oxygen, creating an electrochemical gradient over the inner membrane that drives transmembrane transport and the ATP synthase. Cytochrome c oxidase is the component of the respiratory chain that catalyzes the reduction of oxygen to water. Electrons originating from reduced cytochrome c in the intermembrane space (IMS) are transferred via the dinuclear copper A center (CU(A)) of subunit 2 and heme A of subunit 1 to the active site in subunit 1, a binuclear center (BNC) formed by heme A3 and copper B (CU(B)). The BNC reduces molecular oxygen to 2 water molecules using 4 electrons from cytochrome c in the IMS and 4 protons from the mitochondrial matrix. In Rattus norvegicus (Rat), this protein is Cytochrome c oxidase subunit 4 isoform 1, mitochondrial (Cox4i1).